Consider the following 140-residue polypeptide: Nucleoside diphosphate kinase (140 aa).

ATP contacts are provided by K11, F59, R87, T93, R104, and N114. The active-site Pros-phosphohistidine intermediate is H117.

It belongs to the NDK family. Homotetramer. It depends on Mg(2+) as a cofactor.

It localises to the cytoplasm. The catalysed reaction is a 2'-deoxyribonucleoside 5'-diphosphate + ATP = a 2'-deoxyribonucleoside 5'-triphosphate + ADP. The enzyme catalyses a ribonucleoside 5'-diphosphate + ATP = a ribonucleoside 5'-triphosphate + ADP. Major role in the synthesis of nucleoside triphosphates other than ATP. The ATP gamma phosphate is transferred to the NDP beta phosphate via a ping-pong mechanism, using a phosphorylated active-site intermediate. This is Nucleoside diphosphate kinase from Rickettsia akari (strain Hartford).